A 147-amino-acid chain; its full sequence is Hemoglobin subunit gamma-2 (147 aa).

The Globin domain occupies H3–H147. T13 carries the phosphothreonine modification. Residues S45, S51, and S53 each carry the phosphoserine modification. The residue at position 60 (K60) is an N6-acetyllysine. Position 64 (H64) interacts with heme b. K83 carries the N6-acetyllysine modification. H93 serves as a coordination point for heme b. The residue at position 94 (C94) is an S-nitrosocysteine. Phosphoserine occurs at positions 140, 143, and 144.

The protein belongs to the globin family. In terms of assembly, heterotetramer of two alpha chains and two gamma chains in fetal hemoglobin (Hb F). In terms of tissue distribution, red blood cells.

Its function is as follows. Gamma chains make up the fetal hemoglobin F, in combination with alpha chains. This is Hemoglobin subunit gamma-2 (HBG2) from Pongo pygmaeus (Bornean orangutan).